Here is a 216-residue protein sequence, read N- to C-terminus: Superoxide dismutase [Cu-Zn] 2, chloroplastic (216 aa).

A chloroplast-targeting transit peptide spans 1–62 (MAATNTILAF…APSKALTVVS (62 aa)). Cu cation-binding residues include His108, His110, and His125. A disulfide bridge connects residues Cys119 and Cys208. Positions 125, 133, 142, and 145 each coordinate Zn(2+). His182 is a Cu cation binding site.

This sequence belongs to the Cu-Zn superoxide dismutase family. In terms of assembly, homotetramer. Cu cation is required as a cofactor. The cofactor is Zn(2+). Expressed in leaves (at protein level). The spatial localization is regulated by miR398-mediated silencing. Mostly present in flowers, old rosette leaves and inflorescence, and, to a lower extent, in cauline leaves, stems and roots.

The protein resides in the plastid. The protein localises to the chloroplast. It catalyses the reaction 2 superoxide + 2 H(+) = H2O2 + O2. Its function is as follows. Destroys radicals which are normally produced within the cells and which are toxic to biological systems. Mediates tolerance to stress, including photo-oxidative stress. The polypeptide is Superoxide dismutase [Cu-Zn] 2, chloroplastic (CSD2) (Arabidopsis thaliana (Mouse-ear cress)).